Consider the following 286-residue polypeptide: 4-hydroxy-tetrahydrodipicolinate synthase (286 aa).

Pyruvate is bound at residue threonine 42. Tyrosine 129 acts as the Proton donor/acceptor in catalysis. The active-site Schiff-base intermediate with substrate is the lysine 157. Isoleucine 196 is a binding site for pyruvate.

It belongs to the DapA family. In terms of assembly, homotetramer; dimer of dimers.

It is found in the cytoplasm. It carries out the reaction L-aspartate 4-semialdehyde + pyruvate = (2S,4S)-4-hydroxy-2,3,4,5-tetrahydrodipicolinate + H2O + H(+). It participates in amino-acid biosynthesis; L-lysine biosynthesis via DAP pathway; (S)-tetrahydrodipicolinate from L-aspartate: step 3/4. Its function is as follows. Catalyzes the condensation of (S)-aspartate-beta-semialdehyde [(S)-ASA] and pyruvate to 4-hydroxy-tetrahydrodipicolinate (HTPA). This chain is 4-hydroxy-tetrahydrodipicolinate synthase, found in Chlamydia trachomatis serovar A (strain ATCC VR-571B / DSM 19440 / HAR-13).